A 473-amino-acid chain; its full sequence is 3-isopropylmalate dehydratase large subunit (473 aa).

[4Fe-4S] cluster contacts are provided by Cys353, Cys414, and Cys417.

The protein belongs to the aconitase/IPM isomerase family. LeuC type 1 subfamily. In terms of assembly, heterodimer of LeuC and LeuD. Requires [4Fe-4S] cluster as cofactor.

The enzyme catalyses (2R,3S)-3-isopropylmalate = (2S)-2-isopropylmalate. Its pathway is amino-acid biosynthesis; L-leucine biosynthesis; L-leucine from 3-methyl-2-oxobutanoate: step 2/4. Catalyzes the isomerization between 2-isopropylmalate and 3-isopropylmalate, via the formation of 2-isopropylmaleate. The chain is 3-isopropylmalate dehydratase large subunit from Cellvibrio japonicus (strain Ueda107) (Pseudomonas fluorescens subsp. cellulosa).